The sequence spans 1817 residues: Nuclear pore complex protein Nup98-Nup96 (1817 aa).

The interval 1–156 is FG repeats 1; it reads MFNKSFGTPF…LFGPSSFTAA (156 aa). A GLEBS; interaction with RAE1 region spans residues 157 to 213; sequence PTGTTIKFNPPTGTDTMVKAGVSTNISTKHQCITAMKEYESKSLEELRLEDYQANRK. The tract at residues 214–480 is FG repeats 2; sequence GPQNQVGAGT…NTTTATLGFG (267 aa). Positions 512 to 535 are disordered; it reads PFGDSPLFRNPMSDPKKKEERLKP. At S524 the chain carries Phosphoserine. The span at 525-534 shows a compositional bias: basic and acidic residues; the sequence is DPKKKEERLK. K563 is covalently cross-linked (Glycyl lysine isopeptide (Lys-Gly) (interchain with G-Cter in SUMO2)). The residue at position 603 (K603) is an N6-acetyllysine; alternate. Residue K603 forms a Glycyl lysine isopeptide (Lys-Gly) (interchain with G-Cter in SUMO2); alternate linkage. S608, S612, S618, S623, S625, and S653 each carry phosphoserine. The disordered stretch occupies residues 614–633; sequence VNRDSENLASPSEYPENGER. Residues 662 to 682 form a disordered region; the sequence is PIAKPIPQTPESAGNKHSNSN. K665 is covalently cross-linked (Glycyl lysine isopeptide (Lys-Gly) (interchain with G-Cter in SUMO2)). Phosphothreonine is present on T670. The segment covering 670–682 has biased composition (polar residues); it reads TPESAGNKHSNSN. 4 positions are modified to phosphoserine: S673, S681, S683, and S839. One can recognise a Peptidase S59 domain in the interval 738-880; sequence KVGYYTIPSM…GSWVFKVSHF (143 aa). The active-site Nucleophile is S881. Positions 886 to 937 are disordered; it reads QDSDEEEEEHPSKTSTKKLKTAPLPPASQTTPLQMALNGKPAPPPQSQSPEV. Residues S888, S897, and S934 each carry the phosphoserine modification. Phosphothreonine is present on T1000. S1023, S1028, S1043, S1060, and S1064 each carry phosphoserine. T1070 bears the Phosphothreonine mark. S1329 bears the Phosphoserine mark. The residue at position 1772 (T1772) is a Phosphothreonine.

It belongs to the nucleoporin GLFG family. Part of the nuclear pore complex (NPC). Interacts directly with NUP96. Part of the Nup160 subcomplex in the nuclear pore which is composed of NUP160, NUP133, NUP107 and NUP96; this complex plays a role in RNA export and in tethering NUP98 and NUP153 to the nucleus. Interacts with RAE1. Does not interact with TPR. Interacts with NUP88. Interacts directly with NUP88 and NUP214, subunits of the cytoplasmic filaments of the NPC. Interacts (via N-terminus) with DHX9 (via DRBM, OB-fold and RGG domains); this interaction occurs in a RNA-dependent manner and stimulates DHX9-mediated ATPase activity. In terms of assembly, (Microbial infection) Interacts with HIV-1 capsid protein P24 and nucleocapsid protein P7 (in vitro); the interaction may promote the integration of the virus in the host nucleus (in vitro). As to quaternary structure, (Microbial infection) Interacts with vesicular stomatitis virus protein M. (Microbial infection) Interacts with SARS coronavirus-2/SARS-CoV-2 ORF6 protein; the interaction blocks STAT1 nuclear translocation, antagonizes interferon signaling and blocks mRNA nuclear export (ex vivo). In terms of assembly, (Microbial infection) Interacts with SARS coronavirus/SARS-CoV ORF6 protein. In terms of processing, isoform 1 to isoform 4 are autoproteolytically cleaved to yield Nup98 and Nup96 or Nup98 only, respectively. Cleaved Nup98 is necessary for the targeting of Nup98 to the nuclear pore and the interaction with Nup96. Post-translationally, proteolytically degraded after poliovirus (PV) infection; degradation is partial and NCP- and TPR-binding domains withstand degradation.

The protein localises to the nucleus membrane. It localises to the nucleus. The protein resides in the nuclear pore complex. Its subcellular location is the nucleoplasm. Its function is as follows. Plays a role in the nuclear pore complex (NPC) assembly and/or maintenance. NUP98 and NUP96 are involved in the bidirectional transport across the NPC. May anchor NUP153 and TPR to the NPC. In cooperation with DHX9, plays a role in transcription and alternative splicing activation of a subset of genes. Involved in the localization of DHX9 in discrete intranuclear foci (GLFG-body). (Microbial infection) Interacts with HIV-1 capsid protein P24 and nucleocapsid protein P7 and may thereby promote the integration of the virus in the host nucleus (in vitro). Binding affinity to HIV-1 CA-NC complexes bearing the capsid change Asn-74-Asp is reduced (in vitro). This chain is Nuclear pore complex protein Nup98-Nup96, found in Homo sapiens (Human).